Consider the following 312-residue polypeptide: Beta-ketoacyl-[acyl-carrier-protein] synthase III 1 (312 aa).

Active-site residues include Cys-113 and His-237. The interval 238–242 (QANIR) is ACP-binding. Asn-267 is an active-site residue.

Belongs to the thiolase-like superfamily. FabH family. Homodimer.

It localises to the cytoplasm. The enzyme catalyses malonyl-[ACP] + acetyl-CoA + H(+) = 3-oxobutanoyl-[ACP] + CO2 + CoA. Its pathway is lipid metabolism; fatty acid biosynthesis. Its function is as follows. Catalyzes the condensation reaction of fatty acid synthesis by the addition to an acyl acceptor of two carbons from malonyl-ACP. Catalyzes the first condensation reaction which initiates fatty acid synthesis and may therefore play a role in governing the total rate of fatty acid production. Possesses both acetoacetyl-ACP synthase and acetyl transacylase activities. Its substrate specificity determines the biosynthesis of branched-chain and/or straight-chain of fatty acids. The sequence is that of Beta-ketoacyl-[acyl-carrier-protein] synthase III 1 from Halalkalibacterium halodurans (strain ATCC BAA-125 / DSM 18197 / FERM 7344 / JCM 9153 / C-125) (Bacillus halodurans).